The sequence spans 81 residues: Acyl carrier protein (81 aa).

The region spanning 2-80 (SKVDNIEQKV…DVVNYIKEHK (79 aa)) is the Carrier domain. Position 40 is an O-(pantetheine 4'-phosphoryl)serine (Ser-40).

It belongs to the acyl carrier protein (ACP) family. In terms of processing, 4'-phosphopantetheine is transferred from CoA to a specific serine of apo-ACP by AcpS. This modification is essential for activity because fatty acids are bound in thioester linkage to the sulfhydryl of the prosthetic group.

It localises to the cytoplasm. The protein operates within lipid metabolism; fatty acid biosynthesis. Its function is as follows. Carrier of the growing fatty acid chain in fatty acid biosynthesis. The protein is Acyl carrier protein of Rickettsia bellii (strain OSU 85-389).